A 476-amino-acid polypeptide reads, in one-letter code: Adenosylhomocysteinase (476 aa).

Positions 61, 140, and 200 each coordinate substrate. 201-203 contributes to the NAD(+) binding site; sequence TTT. Residues Lys230 and Asp234 each coordinate substrate. NAD(+)-binding positions include Asn235, 264-269, Glu287, Asn322, 343-345, and Asn389; these read GYGDVG and IGH.

The protein belongs to the adenosylhomocysteinase family. NAD(+) is required as a cofactor.

It localises to the cytoplasm. It catalyses the reaction S-adenosyl-L-homocysteine + H2O = L-homocysteine + adenosine. It functions in the pathway amino-acid biosynthesis; L-homocysteine biosynthesis; L-homocysteine from S-adenosyl-L-homocysteine: step 1/1. Functionally, may play a key role in the regulation of the intracellular concentration of adenosylhomocysteine. The sequence is that of Adenosylhomocysteinase from Acidovorax ebreus (strain TPSY) (Diaphorobacter sp. (strain TPSY)).